Consider the following 412-residue polypeptide: DNA polymerase IV 2 (412 aa).

One can recognise a UmuC domain in the interval Ile7–Gly192. Residues Asp11 and Asp107 each coordinate Mg(2+). Glu108 is a catalytic residue.

This sequence belongs to the DNA polymerase type-Y family. Monomer. The cofactor is Mg(2+).

It is found in the cytoplasm. It catalyses the reaction DNA(n) + a 2'-deoxyribonucleoside 5'-triphosphate = DNA(n+1) + diphosphate. In terms of biological role, poorly processive, error-prone DNA polymerase involved in untargeted mutagenesis. Copies undamaged DNA at stalled replication forks, which arise in vivo from mismatched or misaligned primer ends. These misaligned primers can be extended by PolIV. Exhibits no 3'-5' exonuclease (proofreading) activity. May be involved in translesion synthesis (TSL), in conjunction with the beta clamp from PolIII. The chain is DNA polymerase IV 2 (dinB2) from Bacillus subtilis (strain 168).